The chain runs to 362 residues: 3-dehydroquinate synthase (362 aa).

NAD(+) is bound by residues 71–76, 105–109, 129–130, K142, and K151; these read DGEQYK, GVIGD, and TT. 3 residues coordinate Zn(2+): E184, H247, and H264.

This sequence belongs to the sugar phosphate cyclases superfamily. Dehydroquinate synthase family. NAD(+) serves as cofactor. Co(2+) is required as a cofactor. It depends on Zn(2+) as a cofactor.

The protein resides in the cytoplasm. The catalysed reaction is 7-phospho-2-dehydro-3-deoxy-D-arabino-heptonate = 3-dehydroquinate + phosphate. Its pathway is metabolic intermediate biosynthesis; chorismate biosynthesis; chorismate from D-erythrose 4-phosphate and phosphoenolpyruvate: step 2/7. Its function is as follows. Catalyzes the conversion of 3-deoxy-D-arabino-heptulosonate 7-phosphate (DAHP) to dehydroquinate (DHQ). In Haemophilus ducreyi (strain 35000HP / ATCC 700724), this protein is 3-dehydroquinate synthase.